Consider the following 490-residue polypeptide: Angiopoietin-related protein 1 (490 aa).

Residues 1-22 (MKAFVWTLSVLLFLLGSGHCKG) form the signal peptide. Residues 79-167 (ITRMDLENLK…LNVTTEMLKM (89 aa)) adopt a coiled-coil conformation. N-linked (GlcNAc...) asparagine glycans are attached at residues Asn-159 and Asn-187. In terms of domain architecture, Fibrinogen C-terminal spans 270-490 (FINEGPFKDC…AVQMMIKPID (221 aa)). Cystine bridges form between Cys-279-Cys-308 and Cys-431-Cys-444.

It is found in the secreted. The chain is Angiopoietin-related protein 1 (Angptl1) from Mus musculus (Mouse).